Here is a 212-residue protein sequence, read N- to C-terminus: Probable GTP-binding protein EngB (212 aa).

An EngB-type G domain is found at 27-211 (GPPEIAFAGR…QAAIVLAANG (185 aa)). Residues 35–42 (GRSNVGKS), 62–66 (GRTQE), 89–92 (DMPG), 156–159 (TKTD), and 190–192 (TSS) each bind GTP. Mg(2+) contacts are provided by Ser42 and Thr64.

It belongs to the TRAFAC class TrmE-Era-EngA-EngB-Septin-like GTPase superfamily. EngB GTPase family. Mg(2+) is required as a cofactor.

In terms of biological role, necessary for normal cell division and for the maintenance of normal septation. This is Probable GTP-binding protein EngB from Mesorhizobium japonicum (strain LMG 29417 / CECT 9101 / MAFF 303099) (Mesorhizobium loti (strain MAFF 303099)).